A 221-amino-acid chain; its full sequence is Vacuolar protein sorting-associated protein 20 (221 aa).

Gly2 carries the N-myristoyl glycine lipid modification. Positions Gln72–Lys178 form a coiled coil. The tract at residues Asn170 to Ser221 is disordered. The segment covering Thr197–Glu215 has biased composition (basic and acidic residues).

Belongs to the SNF7 family. Core component of the ESCRT-III complex (endosomal sorting required for transport complex III). ESCRT-III appears to be sequentially assembled as a flat lattice on the endosome membrane and forms a transient 450 kDa complex that contains DID4, oligomerized SNF7, VPS20 and VPS24. SNF7 oligomerization into a membrane-associated filament is nucleated by association of SNF7 with VPS20; the process is terminated through association of VPS24, possibly by capping the SNF7 filament. VPS24 subsequently associates with DID4/VPS2. Interacts with the VPS4. Interacts with VPS25; the interaction mediates the association with the ESCRT-II complex.

It is found in the endosome membrane. Its subcellular location is the vacuole membrane. In terms of biological role, class E VPS protein implicated in concentration and sorting of cargo proteins of the multivesicular body (MVB) for incorporation into intralumenal vesicles. The lumenal sequestrated membrane proteins will be targeted into the vacuole after fusion of the endosome with the vacuole. Acts a component of the ESCRT-III complex, which appears to be critical for late steps in MVB sorting, such as membrane invagination and final cargo sorting and recruitment of late-acting components of the sorting machinery. The MVB pathway requires the sequential function of ESCRT-O, -I,-II and -III complex assemblies. Required for the oligomerization of SNF7 into a membrane-associated filament. The VPS20-SNF7 subcomplex is responsible for the membrane association of the ESCRT-III complex. Also required for the RIM101 repressor proteolytic activation. The polypeptide is Vacuolar protein sorting-associated protein 20 (VPS20) (Saccharomyces cerevisiae (strain ATCC 204508 / S288c) (Baker's yeast)).